The primary structure comprises 166 residues: Putative 4-hydroxy-4-methyl-2-oxoglutarate aldolase (166 aa).

Residues 81 to 84 (GDII) and R103 contribute to the substrate site. D104 is a binding site for a divalent metal cation.

Belongs to the class II aldolase/RraA-like family. As to quaternary structure, homotrimer. A divalent metal cation is required as a cofactor.

The catalysed reaction is 4-hydroxy-4-methyl-2-oxoglutarate = 2 pyruvate. The enzyme catalyses oxaloacetate + H(+) = pyruvate + CO2. In terms of biological role, catalyzes the aldol cleavage of 4-hydroxy-4-methyl-2-oxoglutarate (HMG) into 2 molecules of pyruvate. Also contains a secondary oxaloacetate (OAA) decarboxylase activity due to the common pyruvate enolate transition state formed following C-C bond cleavage in the retro-aldol and decarboxylation reactions. The protein is Putative 4-hydroxy-4-methyl-2-oxoglutarate aldolase of Corynebacterium glutamicum (strain ATCC 13032 / DSM 20300 / JCM 1318 / BCRC 11384 / CCUG 27702 / LMG 3730 / NBRC 12168 / NCIMB 10025 / NRRL B-2784 / 534).